Consider the following 325-residue polypeptide: Siroheme decarboxylase NirDL subunit (325 aa).

Belongs to the Ahb/Nir family. Forms a complex composed of NirDL, NirG and NirH. All proteins are required for the total conversion of siroheme to didecarboxysiroheme.

It carries out the reaction siroheme + 2 H(+) = 12,18-didecarboxysiroheme + 2 CO2. The protein operates within porphyrin-containing compound metabolism. In terms of biological role, involved in heme d1 biosynthesis. Catalyzes the decarboxylation of siroheme into didecarboxysiroheme. In Paracoccus denitrificans (strain Pd 1222), this protein is Siroheme decarboxylase NirDL subunit.